Here is a 347-residue protein sequence, read N- to C-terminus: Uroporphyrinogen decarboxylase (347 aa).

Residues 36–40 (RQAGR), Asp86, Tyr160, Ser212, and His326 contribute to the substrate site.

It belongs to the uroporphyrinogen decarboxylase family. Homodimer.

The protein resides in the cytoplasm. The catalysed reaction is uroporphyrinogen III + 4 H(+) = coproporphyrinogen III + 4 CO2. Its pathway is porphyrin-containing compound metabolism; protoporphyrin-IX biosynthesis; coproporphyrinogen-III from 5-aminolevulinate: step 4/4. Catalyzes the decarboxylation of four acetate groups of uroporphyrinogen-III to yield coproporphyrinogen-III. The chain is Uroporphyrinogen decarboxylase from Wolbachia sp. subsp. Brugia malayi (strain TRS).